Reading from the N-terminus, the 252-residue chain is UPF0246 protein AM1_4276 (252 aa).

It belongs to the UPF0246 family.

In Acaryochloris marina (strain MBIC 11017), this protein is UPF0246 protein AM1_4276.